The sequence spans 583 residues: Cell division protein FtsZ (583 aa).

Residues glycine 24–asparagine 28, glycine 111–glycine 113, glutamate 142, arginine 146, and aspartate 190 each bind GTP. 2 disordered regions span residues histidine 391–alanine 425 and threonine 510–asparagine 583. Over residues alanine 412–alanine 425 the composition is skewed to low complexity.

Belongs to the FtsZ family. As to quaternary structure, homodimer. Polymerizes to form a dynamic ring structure in a strictly GTP-dependent manner. Interacts directly with several other division proteins.

The protein resides in the cytoplasm. In terms of biological role, essential cell division protein that forms a contractile ring structure (Z ring) at the future cell division site. The regulation of the ring assembly controls the timing and the location of cell division. One of the functions of the FtsZ ring is to recruit other cell division proteins to the septum to produce a new cell wall between the dividing cells. Binds GTP and shows GTPase activity. This is Cell division protein FtsZ from Rhizobium radiobacter (Agrobacterium tumefaciens).